The primary structure comprises 159 residues: Phosphopantetheine adenylyltransferase (159 aa).

Ser8 provides a ligand contact to substrate. Residues 8-9 (SF) and His16 contribute to the ATP site. Residues Lys40, Leu73, and Lys87 each coordinate substrate. Residues 88–90 (GLR), Glu98, and 122–128 (YGYVSST) contribute to the ATP site.

Belongs to the bacterial CoaD family. As to quaternary structure, homohexamer. The cofactor is Mg(2+).

The protein resides in the cytoplasm. The enzyme catalyses (R)-4'-phosphopantetheine + ATP + H(+) = 3'-dephospho-CoA + diphosphate. Its pathway is cofactor biosynthesis; coenzyme A biosynthesis; CoA from (R)-pantothenate: step 4/5. In terms of biological role, reversibly transfers an adenylyl group from ATP to 4'-phosphopantetheine, yielding dephospho-CoA (dPCoA) and pyrophosphate. The chain is Phosphopantetheine adenylyltransferase from Corynebacterium efficiens (strain DSM 44549 / YS-314 / AJ 12310 / JCM 11189 / NBRC 100395).